A 333-amino-acid polypeptide reads, in one-letter code: Probable tRNA pseudouridine synthase B (333 aa).

The active-site Nucleophile is D66. The PUA domain occupies 233 to 308; sequence LKKIIVKDSA…EVVEITRVIM (76 aa).

This sequence belongs to the pseudouridine synthase TruB family. Type 2 subfamily.

The enzyme catalyses uridine(55) in tRNA = pseudouridine(55) in tRNA. Its function is as follows. Could be responsible for synthesis of pseudouridine from uracil-55 in the psi GC loop of transfer RNAs. In Methanococcus maripaludis (strain C7 / ATCC BAA-1331), this protein is Probable tRNA pseudouridine synthase B.